The chain runs to 179 residues: PP2C-like domain-containing protein R307 (179 aa).

The region spanning 1–176 (MNESKRENIQ…DNVSVIIIFF (176 aa)) is the PPM-type phosphatase domain.

It localises to the virion. The protein is PP2C-like domain-containing protein R307 of Acanthamoeba polyphaga mimivirus (APMV).